A 279-amino-acid polypeptide reads, in one-letter code: Octanoyl-[GcvH]:protein N-octanoyltransferase (279 aa).

Residues 41-247 (DLSCNVVRTW…ALKDLGANLN (207 aa)) enclose the BPL/LPL catalytic domain. The active-site Acyl-thioester intermediate is Cys146.

Belongs to the octanoyltransferase LipL family.

It carries out the reaction N(6)-octanoyl-L-lysyl-[glycine-cleavage complex H protein] + L-lysyl-[lipoyl-carrier protein] = N(6)-octanoyl-L-lysyl-[lipoyl-carrier protein] + L-lysyl-[glycine-cleavage complex H protein]. It functions in the pathway protein modification; protein lipoylation via endogenous pathway; protein N(6)-(lipoyl)lysine from octanoyl-[acyl-carrier-protein]. Functionally, catalyzes the amidotransfer (transamidation) of the octanoyl moiety from octanoyl-GcvH to the lipoyl domain of the E2 subunit of lipoate-dependent enzymes. The sequence is that of Octanoyl-[GcvH]:protein N-octanoyltransferase from Staphylococcus epidermidis (strain ATCC 35984 / DSM 28319 / BCRC 17069 / CCUG 31568 / BM 3577 / RP62A).